The following is a 398-amino-acid chain: CCA-adding enzyme (398 aa).

The ATP site is built by Gly-32 and Arg-35. Positions 32 and 35 each coordinate CTP. Residues Asp-45 and Asp-47 each coordinate Mg(2+). Positions 116, 159, 162, 165, and 168 each coordinate ATP. Positions 116, 159, 162, 165, and 168 each coordinate CTP.

This sequence belongs to the tRNA nucleotidyltransferase/poly(A) polymerase family. Bacterial CCA-adding enzyme type 3 subfamily. Homodimer. Mg(2+) is required as a cofactor.

The enzyme catalyses a tRNA precursor + 2 CTP + ATP = a tRNA with a 3' CCA end + 3 diphosphate. It carries out the reaction a tRNA with a 3' CCA end + 2 CTP + ATP = a tRNA with a 3' CCACCA end + 3 diphosphate. Functionally, catalyzes the addition and repair of the essential 3'-terminal CCA sequence in tRNAs without using a nucleic acid template. Adds these three nucleotides in the order of C, C, and A to the tRNA nucleotide-73, using CTP and ATP as substrates and producing inorganic pyrophosphate. tRNA 3'-terminal CCA addition is required both for tRNA processing and repair. Also involved in tRNA surveillance by mediating tandem CCA addition to generate a CCACCA at the 3' terminus of unstable tRNAs. While stable tRNAs receive only 3'-terminal CCA, unstable tRNAs are marked with CCACCA and rapidly degraded. This is CCA-adding enzyme from Lactobacillus gasseri (strain ATCC 33323 / DSM 20243 / BCRC 14619 / CIP 102991 / JCM 1131 / KCTC 3163 / NCIMB 11718 / NCTC 13722 / AM63).